Reading from the N-terminus, the 138-residue chain is Small ribosomal subunit protein uS12 (138 aa).

Residues 33-55 (KEHTNVSSPQKRGVCTRVGTMTP) form a disordered region. A 3-methylthioaspartic acid modification is found at Asp102.

It belongs to the universal ribosomal protein uS12 family. Part of the 30S ribosomal subunit. Contacts proteins S8 and S17. May interact with IF1 in the 30S initiation complex.

Its function is as follows. With S4 and S5 plays an important role in translational accuracy. In terms of biological role, interacts with and stabilizes bases of the 16S rRNA that are involved in tRNA selection in the A site and with the mRNA backbone. Located at the interface of the 30S and 50S subunits, it traverses the body of the 30S subunit contacting proteins on the other side and probably holding the rRNA structure together. The combined cluster of proteins S8, S12 and S17 appears to hold together the shoulder and platform of the 30S subunit. This is Small ribosomal subunit protein uS12 from Bacillus velezensis (strain DSM 23117 / BGSC 10A6 / LMG 26770 / FZB42) (Bacillus amyloliquefaciens subsp. plantarum).